The following is a 319-amino-acid chain: Pantothenate kinase (319 aa).

An ATP-binding site is contributed by 96-103 (GSVAVGKS).

The protein belongs to the prokaryotic pantothenate kinase family.

Its subcellular location is the cytoplasm. The catalysed reaction is (R)-pantothenate + ATP = (R)-4'-phosphopantothenate + ADP + H(+). It functions in the pathway cofactor biosynthesis; coenzyme A biosynthesis; CoA from (R)-pantothenate: step 1/5. In Bacillus velezensis (strain DSM 23117 / BGSC 10A6 / LMG 26770 / FZB42) (Bacillus amyloliquefaciens subsp. plantarum), this protein is Pantothenate kinase.